The chain runs to 873 residues: F-box only protein 41 (873 aa).

Positions 85–97 (ESTSFQGKEQATG) are enriched in polar residues. Disordered regions lie at residues 85-110 (ESTSFQGKEQATGPSPAGPHLLHHHH), 163-193 (SSACSTPPPGPGPGPCSGPSSASPASPSPAD), and 345-540 (SSSC…PSRS). Residues 168 to 178 (TPPPGPGPGPC) show a composition bias toward pro residues. Low complexity predominate over residues 179–192 (SGPSSASPASPSPA). The stretch at 207–349 (ALEKLEVDRR…QLQVISSSCG (143 aa)) forms a coiled coil. Residues 357-371 (GRGGGGSASGPGVRG) are compositionally biased toward gly residues. Position 358 is an omega-N-methylarginine (R358). Polar residues-rich tracts occupy residues 384–414 (VPSTYAVSRHGSSPSTGASSRVPAASQSSGC) and 442–456 (AQATNGGSERSQAPR). S476 bears the Phosphoserine mark. T477 is subject to Phosphothreonine. Positions 548–592 (ILKMRAALFCIFTYLDTRTLLHAAEVCRDWRFVARHPAVWTRVLL) constitute an F-box domain. Residue S760 is modified to Phosphoserine.

As to quaternary structure, directly interacts with SKP1 and CUL1.

Its function is as follows. Substrate-recognition component of the SCF (SKP1-CUL1-F-box protein)-type E3 ubiquitin ligase complex. In Mus musculus (Mouse), this protein is F-box only protein 41 (Fbxo41).